Here is a 107-residue protein sequence, read N- to C-terminus: Theromyzin (107 aa).

The signal sequence occupies residues 1–21; sequence MHAKIILALFLGMTAFLAVQA.

Coelomic liquid (at protein level). Expressed in large fat cells in contact with coelomic cavities, in intestinal epithelia and at the epidermis level.

It localises to the secreted. In terms of biological role, has bacteriostatic activity against M.luteus. No activity toward E.coli and F.oxysporum. The protein is Theromyzin of Theromyzon tessulatum (Duck leech).